Consider the following 931-residue polypeptide: Synaptopodin (931 aa).

Disordered stretches follow at residues 56–78 (EEEG…APAI) and 113–243 (ASVS…MEGY). The residue at position 134 (Ser134) is a Phosphoserine. A compositionally biased stretch (basic and acidic residues) spans 136–148 (TEKDLKEAKERSQ). Polar residues-rich tracts occupy residues 153–164 (QLTTPPSSNSRG) and 188–200 (PKLS…TGHP). Ser202, Ser222, and Ser258 each carry phosphoserine. A compositionally biased stretch (low complexity) spans 214-232 (PTSPSKPGSPKHSSSQSPS). The tract at residues 280 to 420 (GLHLSQNRET…SSSGPPAADL (141 aa)) is disordered. Polar residues-rich tracts occupy residues 282–293 (HLSQNRETQQSS) and 309–370 (INQN…NTPS). Over residues 373–384 (DGQRPVPAEEVR) the composition is skewed to basic and acidic residues. Phosphoserine occurs at positions 490 and 514. Disordered stretches follow at residues 542–591 (RRPL…KGQV) and 691–711 (SPRI…EASG). Thr549 carries the post-translational modification Phosphothreonine. The PPxY motif motif lies at 551-554 (PPTY). Polar residues predominate over residues 556-568 (ETLSTAPVASQVR). Ser569 bears the Phosphoserine mark. Positions 569-580 (SPPSYSTLYPSS) are enriched in low complexity. The PPxY motif motif lies at 570-573 (PPSY). Phosphoserine occurs at positions 691, 742, 746, and 767. Thr771 is subject to Phosphothreonine. The segment at 775 to 918 (SLYHGYLPEN…RPSFSTRNAG (144 aa)) is disordered. The segment covering 816–841 (SSRATSSRASSRTVSPRAASPAKPSS) has biased composition (low complexity). Ser835 is modified (phosphoserine). Arg850 carries the omega-N-methylarginine modification. Position 856 is a phosphoserine (Ser856). Residues 874-895 (VQDSLQPTAVSPTYSSDISPVS) show a composition bias toward polar residues.

The protein belongs to the synaptopodin family. As to quaternary structure, interacts with BAIAP1. Interacts with actin. Interacts (via PPxY motifs) with WWC1 (via WW domains). Post-translationally, O-glycosylated. In terms of tissue distribution, expressed at high levels in brain and at moderate, but still significant levels in the heart, skeletal muscle, lung and kidney. In brain, expressed in the cerebral cortex, hippocampus, olfactory bulb and striatum.

Its subcellular location is the cytoplasm. It localises to the cytoskeleton. The protein localises to the cell junction. The protein resides in the tight junction. It is found in the perikaryon. Its subcellular location is the cell projection. It localises to the dendritic spine. The protein localises to the postsynaptic density. The protein resides in the synapse. It is found in the cytosol. Actin-associated protein that may play a role in modulating actin-based shape and motility of dendritic spines and renal podocyte foot processes. Seems to be essential for the formation of spine apparatuses in spines of telencephalic neurons, which is involved in synaptic plasticity. This chain is Synaptopodin (Synpo), found in Rattus norvegicus (Rat).